The following is a 387-amino-acid chain: Involucrin (387 aa).

2 disordered regions span residues 1–319 and 347–387; these read MSQQ…VHLG and VCIP…LKQE. Residues 28–37 show a composition bias toward polar residues; the sequence is NTQQDQMKQP. A compositionally biased stretch (low complexity) spans 62 to 71; the sequence is QVPEQECEPQ. Composition is skewed to basic and acidic residues over residues 85-96, 104-115, 147-179, and 231-245; these read KQQEPQEQEVHP, QEQEAHLGKKQE, QEVHLEKQLQEPQEVHLEKQLQEQEVHLEKQLQ, and QLEKQQEAQEQELHL.

This sequence belongs to the involucrin family. As to quaternary structure, directly or indirectly cross-linked to cornifelin (CNFN). Post-translationally, substrate of transglutaminase. Specific glutamines or lysines are cross-linked to keratins, desmoplakin and to inter involucrin molecules. In terms of tissue distribution, keratinocytes of epidermis and other stratified squamous epithelia.

It is found in the cytoplasm. Its function is as follows. Part of the insoluble cornified cell envelope (CE) of stratified squamous epithelia. The polypeptide is Involucrin (IVL) (Cephalopachus bancanus (Western tarsier)).